The following is a 192-amino-acid chain: Secreted phosphoprotein 24 (192 aa).

The signal sequence occupies residues 1–29; the sequence is MGKTPEDFERHTMRSLIFVLALSVFTCSG. 2 cysteine pairs are disulfide-bonded: cysteine 92/cysteine 103 and cysteine 116/cysteine 134. The disordered stretch occupies residues 155-192; it reads TDPRKRGSSRSEAFSSRGRGHSNGDWRKPDYTSPGKVE.

This sequence belongs to the SPP2 family. Post-translationally, multiply phosphorylated at serine residues.

The protein localises to the secreted. Its function is as follows. Could coordinate an aspect of bone turnover. This Gallus gallus (Chicken) protein is Secreted phosphoprotein 24 (SPP2).